Reading from the N-terminus, the 243-residue chain is MSETHFGFEKVDETEKAGKVAGVFHSVASKYDVMNDLMSGGMHRLWKMFTIAQANVRPGHKVLDIAGGTGDLAKAFAKQAGPTGQVWLTDINESMLRVGRDRLLDKGVVTPVALCDAEHIPFPDNYFDLVTVAFGLRNMTHKDAALAEMRRVVKPGGKVMVLEFSKVWKPLEKAYDVYSFQVLPWLGQKVAGDAASYRYLAESIRMHPDQTSLVRLMEQVGLEKVEYFNLTAGVVALHVGRKY.

Residues Thr69, Asp90, and 116–117 contribute to the S-adenosyl-L-methionine site; that span reads DA.

The protein belongs to the class I-like SAM-binding methyltransferase superfamily. MenG/UbiE family.

It catalyses the reaction a 2-demethylmenaquinol + S-adenosyl-L-methionine = a menaquinol + S-adenosyl-L-homocysteine + H(+). The catalysed reaction is a 2-methoxy-6-(all-trans-polyprenyl)benzene-1,4-diol + S-adenosyl-L-methionine = a 5-methoxy-2-methyl-3-(all-trans-polyprenyl)benzene-1,4-diol + S-adenosyl-L-homocysteine + H(+). It functions in the pathway quinol/quinone metabolism; menaquinone biosynthesis; menaquinol from 1,4-dihydroxy-2-naphthoate: step 2/2. It participates in cofactor biosynthesis; ubiquinone biosynthesis. In terms of biological role, methyltransferase required for the conversion of demethylmenaquinol (DMKH2) to menaquinol (MKH2) and the conversion of 2-polyprenyl-6-methoxy-1,4-benzoquinol (DDMQH2) to 2-polyprenyl-3-methyl-6-methoxy-1,4-benzoquinol (DMQH2). The chain is Ubiquinone/menaquinone biosynthesis C-methyltransferase UbiE from Cupriavidus pinatubonensis (strain JMP 134 / LMG 1197) (Cupriavidus necator (strain JMP 134)).